A 347-amino-acid chain; its full sequence is Protein RecA (347 aa).

Residue Gly-64 to Thr-71 coordinates ATP.

The protein belongs to the RecA family.

It localises to the cytoplasm. Its function is as follows. Can catalyze the hydrolysis of ATP in the presence of single-stranded DNA, the ATP-dependent uptake of single-stranded DNA by duplex DNA, and the ATP-dependent hybridization of homologous single-stranded DNAs. It interacts with LexA causing its activation and leading to its autocatalytic cleavage. The protein is Protein RecA of Bartonella henselae (strain ATCC 49882 / DSM 28221 / CCUG 30454 / Houston 1) (Rochalimaea henselae).